Consider the following 269-residue polypeptide: Signal recognition particle receptor subunit beta (269 aa).

A helical transmembrane segment spans residues 35 to 55 (LLSVAVAVLAVLLTLVFWKFI). GTP-binding positions include 69–77 (GLCDSGKTL) and 90–93 (TQTS). Ser110 carries the post-translational modification Phosphoserine. Gly118 is a binding site for GTP. Phosphothreonine is present on Thr212. Ala246 contacts GTP.

It belongs to the SRP receptor beta subunit family. Heterodimer with SRPRA.

The protein localises to the endoplasmic reticulum membrane. Functionally, component of the signal recognition particle (SRP) complex receptor (SR). Ensures, in conjunction with the SRP complex, the correct targeting of the nascent secretory proteins to the endoplasmic reticulum membrane system. May mediate the membrane association of SR. The chain is Signal recognition particle receptor subunit beta (Srprb) from Rattus norvegicus (Rat).